A 441-amino-acid polypeptide reads, in one-letter code: Ribulose bisphosphate carboxylase large chain (441 aa).

Substrate contacts are provided by Asn-89 and Thr-139. Residue Lys-141 is the Proton acceptor of the active site. Lys-143 provides a ligand contact to substrate. Residues Lys-167, Asp-169, and Glu-170 each contribute to the Mg(2+) site. Lys-167 bears the N6-carboxylysine mark. The active-site Proton acceptor is His-260. Positions 261, 293, and 345 each coordinate substrate.

The protein belongs to the RuBisCO large chain family. Type I subfamily. Heterohexadecamer of 8 large chains and 8 small chains; disulfide-linked. The disulfide link is formed within the large subunit homodimers. The cofactor is Mg(2+). The disulfide bond which can form in the large chain dimeric partners within the hexadecamer appears to be associated with oxidative stress and protein turnover.

It localises to the plastid. The protein localises to the chloroplast. The catalysed reaction is 2 (2R)-3-phosphoglycerate + 2 H(+) = D-ribulose 1,5-bisphosphate + CO2 + H2O. The enzyme catalyses D-ribulose 1,5-bisphosphate + O2 = 2-phosphoglycolate + (2R)-3-phosphoglycerate + 2 H(+). In terms of biological role, ruBisCO catalyzes two reactions: the carboxylation of D-ribulose 1,5-bisphosphate, the primary event in carbon dioxide fixation, as well as the oxidative fragmentation of the pentose substrate in the photorespiration process. Both reactions occur simultaneously and in competition at the same active site. This chain is Ribulose bisphosphate carboxylase large chain, found in Viola sororia (Woolly blue violet).